Consider the following 454-residue polypeptide: Inner membrane permease YgbN (454 aa).

Residue M1 is a topological domain, periplasmic. Residues 2–22 (STITLLCIALAGVIMLLLLVI) traverse the membrane as a helical segment. The Cytoplasmic segment spans residues 23–27 (KAKVQ). The chain crosses the membrane as a helical span at residues 28-48 (PFVALLLVSLLVALAAGIPAG). Topologically, residues 49-52 (EVGK) are periplasmic. The helical transmembrane segment at 53–73 (VMIAGMGGVLGSVTIIIGLGA) threads the bilayer. Topologically, residues 74–108 (MLGRMIEHSGGAESLANYFSRKLGDKRTIAALTLA) are cytoplasmic. The helical transmembrane segment at 109–129 (AFFLGIPVFFDVGFIILAPII) threads the bilayer. Topologically, residues 130-137 (YGFAKVAK) are periplasmic. A helical transmembrane segment spans residues 138–158 (ISPLKFGLPVAGIMLTVHVAV). The Cytoplasmic portion of the chain corresponds to 159–174 (PPHPGPVAAAGLLHAD). Residues 175–195 (IGWLTIIGIAISIPVGVVGYF) traverse the membrane as a helical segment. Topologically, residues 196–235 (AAKIINKRQYAMSVEVLEQMQLAPASEEGATKLSDKINPP) are periplasmic. Residues 236-256 (GVALVTSLIVIPIAIIMAGTV) form a helical membrane-spanning segment. Residues 257-273 (SATLMPPSHPLLGTLQL) are Cytoplasmic-facing. The helical transmembrane segment at 274–294 (IGSPMVALMIALVLAFWLLAL) threads the bilayer. Residues 295–305 (RRGWSLQHTSD) are Periplasmic-facing. The helical transmembrane segment at 306-326 (IMGSALPTAAVVILVTGAGGV) threads the bilayer. Residues 327–341 (FGKVLVESGVGKALA) lie on the Cytoplasmic side of the membrane. The helical transmembrane segment at 342 to 362 (NMLQMIDLPLLPAAFIISLAL) threads the bilayer. The Periplasmic portion of the chain corresponds to 363–383 (RASQGSATVAILTTGGLLSEA). The helical transmembrane segment at 384 to 404 (VMGLNPIQCVLVTLAACFGGL) threads the bilayer. Topologically, residues 405 to 433 (GASHINDSGFWIVTKYLGLSVADGLKTWT) are cytoplasmic. Residues 434–454 (VLTTILGFTGFLITWCVWAVI) form a helical membrane-spanning segment.

The protein belongs to the GntP permease family.

It localises to the cell inner membrane. The polypeptide is Inner membrane permease YgbN (ygbN) (Escherichia coli (strain K12)).